The primary structure comprises 383 residues: Opsin Rh3 (383 aa).

Over 1 to 57 the chain is Extracellular; the sequence is MESGNVSSSLFGNVSTALRPEARLSAETRLLGWNVPPEELRHIPEHWLTYPEPPESM. N13 is a glycosylation site (N-linked (GlcNAc...) asparagine). The chain crosses the membrane as a helical span at residues 58 to 82; that stretch reads NYLLGTLYIFFTLMSMLGNGLVIWV. Residues 83–94 lie on the Cytoplasmic side of the membrane; that stretch reads FSAAKSLRTPSN. A helical transmembrane segment spans residues 95-119; sequence ILVINLAFCDFMMMVKTPIFIYNSF. The Extracellular segment spans residues 120-133; that stretch reads HQGYALGHLGCQIF. C130 and C207 are joined by a disulfide. Residues 134–153 form a helical membrane-spanning segment; that stretch reads GIIGSYTGIAAGATNAFIAY. The Cytoplasmic segment spans residues 154–171; it reads DRFNVITRPMEGKMTHGK. The chain crosses the membrane as a helical span at residues 172–196; it reads AIAMIIFIYMYATPWVVACYTETWG. Topologically, residues 197–220 are extracellular; it reads RFVPEGYLTSCTFDYLTDNFDTRL. The chain crosses the membrane as a helical span at residues 221-248; sequence FVACIFFFSFVCPTTMITYYYSQIVGHV. At 249–284 the chain is on the cytoplasmic side; sequence FSHEKALRDQAKKMNVESLRSNVDKNKETAEIRIAK. A helical membrane pass occupies residues 285–308; that stretch reads AAITICFLFFCSWTPYGVMSLIGA. Over 309–316 the chain is Extracellular; it reads FGDKTLLT. A helical transmembrane segment spans residues 317–341; the sequence is PGATMIPACACKMVACIDPFVYAIS. K328 is modified (N6-(retinylidene)lysine). The Cytoplasmic portion of the chain corresponds to 342-383; sequence HPRYRMELQKRCPWLALNEKAPESSAVASTSTTQEPQQTTAA. The disordered stretch occupies residues 362–383; it reads APESSAVASTSTTQEPQQTTAA. Low complexity predominate over residues 369–383; it reads ASTSTTQEPQQTTAA.

Belongs to the G-protein coupled receptor 1 family. Opsin subfamily. Phosphorylated on some or all of the serine and threonine residues present in the C-terminal region.

It is found in the membrane. Its function is as follows. Visual pigments are the light-absorbing molecules that mediate vision. They consist of an apoprotein, opsin, covalently linked to cis-retinal. This Drosophila melanogaster (Fruit fly) protein is Opsin Rh3 (Rh3).